An 880-amino-acid polypeptide reads, in one-letter code: Leucine--tRNA ligase (880 aa).

The 'HIGH' region signature appears at 46–56; that stretch reads PYPSGALHMGH. Positions 638–642 match the 'KMSKS' region motif; that stretch reads KMSKS. Residue Lys-641 participates in ATP binding.

It belongs to the class-I aminoacyl-tRNA synthetase family.

It localises to the cytoplasm. The enzyme catalyses tRNA(Leu) + L-leucine + ATP = L-leucyl-tRNA(Leu) + AMP + diphosphate. The sequence is that of Leucine--tRNA ligase from Xanthomonas oryzae pv. oryzae (strain MAFF 311018).